A 796-amino-acid polypeptide reads, in one-letter code: YY1-associated protein 1 (796 aa).

Disordered stretches follow at residues 1-45 (MEEE…ATPS) and 463-488 (IQPS…SEAP). The span at 23 to 36 (PPDKREGSAVDPGK) shows a compositional bias: basic and acidic residues. Over residues 463–472 (IQPSPSLQPS) the composition is skewed to low complexity. The span at 473–485 (FNPGKTPAQSTHS) shows a compositional bias: polar residues. Serine 724 is subject to Phosphoserine. The tract at residues 755–776 (RQALEPLPQGIQESLNNSSPGD) is disordered. Polar residues predominate over residues 765-774 (IQESLNNSSP).

Interacts with YY1. Interacts with MAD2L2. Interacts with INO80. As to expression, ubiquitous. Detected in small intestine, skeletal muscle, lung, pancreas, brain, stomach, spleen, colon and heart. Detected at very low levels in healthy liver. Highly expressed in most liver carcinomas.

It localises to the cytoplasm. The protein localises to the nucleus. The protein resides in the nucleoplasm. Its subcellular location is the nucleolus. Functionally, associates with the INO80 chromatin remodeling complex, which is responsible for transcriptional regulation, DNA repair, and replication. Enhances transcription activation by YY1. Plays a role in cell cycle regulation. This is YY1-associated protein 1 from Homo sapiens (Human).